We begin with the raw amino-acid sequence, 329 residues long: RNA polymerase sigma factor SigB (329 aa).

A compositionally biased stretch (polar residues) spans 1-12; that stretch reads MTSPSDVEASTE. The interval 1 to 27 is disordered; the sequence is MTSPSDVEASTETVDRGSRRNQTNDNP. Positions 120–133 match the Polymerase core binding motif; that stretch reads DLIQEGNLGLIRAM. The segment at residues 290–309 is a DNA-binding region (H-T-H motif); the sequence is LDQIGRQFGLSRERVRQIER.

Belongs to the sigma-70 factor family.

In terms of biological role, sigma factors are initiation factors that promote the attachment of RNA polymerase to specific initiation sites and are then released. This chain is RNA polymerase sigma factor SigB (sigB), found in Corynebacterium diphtheriae (strain ATCC 700971 / NCTC 13129 / Biotype gravis).